The primary structure comprises 37 residues: Disintegrin morulustatin (37 aa).

3 cysteine pairs are disulfide-bonded: Cys12/Cys16, Cys22/Cys36, and Cys24/Cys31.

It belongs to the venom metalloproteinase (M12B) family. P-II subfamily. P-IIa sub-subfamily. In terms of tissue distribution, expressed by the venom gland.

The protein localises to the secreted. Its function is as follows. Inhibits ADP-induced platelet aggregation in human whole blood in a concentration-dependent manner (IC(50)=89.5 nM). The protein is Disintegrin morulustatin of Crotalus morulus (Tamaulipan rock rattlesnake).